We begin with the raw amino-acid sequence, 322 residues long: Protease HtpX homolog (322 aa).

A run of 2 helical transmembrane segments spans residues 19–39 and 61–81; these read ILLI…CYLL and FINL…IAYF. H165 serves as a coordination point for Zn(2+). E166 is a catalytic residue. Residue H169 participates in Zn(2+) binding. 2 helical membrane passes run 175–195 and 216–236; these read VRLL…AQIA and ILIL…ATLM. E245 provides a ligand contact to Zn(2+).

This sequence belongs to the peptidase M48B family. It depends on Zn(2+) as a cofactor.

It localises to the cell inner membrane. This Bacteroides fragilis (strain YCH46) protein is Protease HtpX homolog.